The chain runs to 108 residues: FK506-binding protein 1 (108 aa).

The disordered stretch occupies residues 1-20; sequence MGVTVETIQPGDGKNFPKKG. In terms of domain architecture, PPIase FKBP-type spans 20–108; the sequence is GDTVTMHYTG…NFEVELLKIN (89 aa).

Belongs to the FKBP-type PPIase family. FKBP1 subfamily.

The protein localises to the cytoplasm. The enzyme catalyses [protein]-peptidylproline (omega=180) = [protein]-peptidylproline (omega=0). Its activity is regulated as follows. Inhibited by both FK506 and rapamycin. Functionally, PPIases accelerate the folding of proteins. It catalyzes the cis-trans isomerization of proline imidic peptide bonds in oligopeptides. This chain is FK506-binding protein 1 (FKBP1), found in Rhizopus delemar (strain RA 99-880 / ATCC MYA-4621 / FGSC 9543 / NRRL 43880) (Mucormycosis agent).